We begin with the raw amino-acid sequence, 598 residues long: Chaperone protein DnaK (598 aa).

At T175 the chain carries Phosphothreonine; by autocatalysis. Residues 571–591 (AKSAAASSNKDDSLNNNSSSN) show a composition bias toward low complexity. Residues 571–598 (AKSAAASSNKDDSLNNNSSSNNDEETFE) are disordered.

Belongs to the heat shock protein 70 family.

Acts as a chaperone. This is Chaperone protein DnaK from Mycoplasmopsis agalactiae (strain NCTC 10123 / CIP 59.7 / PG2) (Mycoplasma agalactiae).